A 243-amino-acid chain; its full sequence is Small ribosomal subunit protein uS2 (243 aa).

The protein belongs to the universal ribosomal protein uS2 family.

This Pseudoalteromonas atlantica (strain T6c / ATCC BAA-1087) protein is Small ribosomal subunit protein uS2.